Here is a 111-residue protein sequence, read N- to C-terminus: Ribosome-binding factor A (111 aa).

It belongs to the RbfA family. Monomer. Binds 30S ribosomal subunits, but not 50S ribosomal subunits or 70S ribosomes.

Its subcellular location is the cytoplasm. In terms of biological role, one of several proteins that assist in the late maturation steps of the functional core of the 30S ribosomal subunit. Associates with free 30S ribosomal subunits (but not with 30S subunits that are part of 70S ribosomes or polysomes). Required for efficient processing of 16S rRNA. May interact with the 5'-terminal helix region of 16S rRNA. The chain is Ribosome-binding factor A from Helicobacter acinonychis (strain Sheeba).